The following is a 231-amino-acid chain: Phosphatidylserine decarboxylase proenzyme (231 aa).

Ser188 acts as the Schiff-base intermediate with substrate; via pyruvic acid in catalysis. Ser188 is subject to Pyruvic acid (Ser); by autocatalysis.

Belongs to the phosphatidylserine decarboxylase family. PSD-A subfamily. As to quaternary structure, heterodimer of a large membrane-associated beta subunit and a small pyruvoyl-containing alpha subunit. Pyruvate is required as a cofactor. Is synthesized initially as an inactive proenzyme. Formation of the active enzyme involves a self-maturation process in which the active site pyruvoyl group is generated from an internal serine residue via an autocatalytic post-translational modification. Two non-identical subunits are generated from the proenzyme in this reaction, and the pyruvate is formed at the N-terminus of the alpha chain, which is derived from the carboxyl end of the proenzyme. The post-translation cleavage follows an unusual pathway, termed non-hydrolytic serinolysis, in which the side chain hydroxyl group of the serine supplies its oxygen atom to form the C-terminus of the beta chain, while the remainder of the serine residue undergoes an oxidative deamination to produce ammonia and the pyruvoyl prosthetic group on the alpha chain.

It is found in the cell membrane. The catalysed reaction is a 1,2-diacyl-sn-glycero-3-phospho-L-serine + H(+) = a 1,2-diacyl-sn-glycero-3-phosphoethanolamine + CO2. It participates in phospholipid metabolism; phosphatidylethanolamine biosynthesis; phosphatidylethanolamine from CDP-diacylglycerol: step 2/2. Its function is as follows. Catalyzes the formation of phosphatidylethanolamine (PtdEtn) from phosphatidylserine (PtdSer). The polypeptide is Phosphatidylserine decarboxylase proenzyme (Rickettsia akari (strain Hartford)).